Here is a 201-residue protein sequence, read N- to C-terminus: MIGRLRGTLAEKQPPHLILDVNGVGYEVEVPMTTLYRLPSVGEPVTLHTHLVVREDAHLLYGFAEKRERELFRELIRLNGVGPKLALALMSGLEVDELVRCVQAQDTSTLVKIPGVGKKTAERLLVELKDRFKAWENMPTIAPLVMEPRASATVSSAEADAVSALIALGFKPQEASRAVAAVPGEDLSSEEMIRQALKGMV.

A domain I region spans residues 1–64; the sequence is MIGRLRGTLA…EDAHLLYGFA (64 aa). Residues 65-143 are domain II; the sequence is EKRERELFRE…AWENMPTIAP (79 aa). A flexible linker region spans residues 144–152; it reads LVMEPRASA. The segment at 153 to 201 is domain III; the sequence is TVSSAEADAVSALIALGFKPQEASRAVAAVPGEDLSSEEMIRQALKGMV.

The protein belongs to the RuvA family. As to quaternary structure, homotetramer. Forms an RuvA(8)-RuvB(12)-Holliday junction (HJ) complex. HJ DNA is sandwiched between 2 RuvA tetramers; dsDNA enters through RuvA and exits via RuvB. An RuvB hexamer assembles on each DNA strand where it exits the tetramer. Each RuvB hexamer is contacted by two RuvA subunits (via domain III) on 2 adjacent RuvB subunits; this complex drives branch migration. In the full resolvosome a probable DNA-RuvA(4)-RuvB(12)-RuvC(2) complex forms which resolves the HJ.

The protein resides in the cytoplasm. Its function is as follows. The RuvA-RuvB-RuvC complex processes Holliday junction (HJ) DNA during genetic recombination and DNA repair, while the RuvA-RuvB complex plays an important role in the rescue of blocked DNA replication forks via replication fork reversal (RFR). RuvA specifically binds to HJ cruciform DNA, conferring on it an open structure. The RuvB hexamer acts as an ATP-dependent pump, pulling dsDNA into and through the RuvAB complex. HJ branch migration allows RuvC to scan DNA until it finds its consensus sequence, where it cleaves and resolves the cruciform DNA. The protein is Holliday junction branch migration complex subunit RuvA of Pseudomonas aeruginosa (strain LESB58).